Reading from the N-terminus, the 221-residue chain is 5'-nucleotidase (221 aa).

The Nucleophile role is filled by aspartate 14.

It belongs to the HAD-like hydrolase superfamily. The cofactor is Mn(2+). Mg(2+) is required as a cofactor.

The enzyme catalyses a ribonucleoside 5'-phosphate + H2O = a ribonucleoside + phosphate. In terms of biological role, specifically dephosphorylates nucleoside 5'-monophosphates to nucleosides and inorganic phosphate. Displays high activity toward 5'-UMP and 5'-IMP, significant activity against 5'-XMP and 5'-TMP, and low activity against 5'-CMP. In Pseudomonas aeruginosa (strain ATCC 15692 / DSM 22644 / CIP 104116 / JCM 14847 / LMG 12228 / 1C / PRS 101 / PAO1), this protein is 5'-nucleotidase.